Here is a 202-residue protein sequence, read N- to C-terminus: Holliday junction branch migration complex subunit RuvA (202 aa).

The interval 1–64 (MISRLRGTVL…EDAFDLFGFL (64 aa)) is domain I. Positions 65–143 (TKGEEEVFLL…TIHLEAVSRG (79 aa)) are domain II. Residues 143-147 (GTAPA) form a flexible linker region. Residues 148–202 (AVSGAHADLVSALLNLGYKQPQAEKAADLASERLGAEATFQALFREALKALRSGG) are domain III.

The protein belongs to the RuvA family. Homotetramer. Forms an RuvA(8)-RuvB(12)-Holliday junction (HJ) complex. HJ DNA is sandwiched between 2 RuvA tetramers; dsDNA enters through RuvA and exits via RuvB. An RuvB hexamer assembles on each DNA strand where it exits the tetramer. Each RuvB hexamer is contacted by two RuvA subunits (via domain III) on 2 adjacent RuvB subunits; this complex drives branch migration. In the full resolvosome a probable DNA-RuvA(4)-RuvB(12)-RuvC(2) complex forms which resolves the HJ.

It is found in the cytoplasm. Its function is as follows. The RuvA-RuvB-RuvC complex processes Holliday junction (HJ) DNA during genetic recombination and DNA repair, while the RuvA-RuvB complex plays an important role in the rescue of blocked DNA replication forks via replication fork reversal (RFR). RuvA specifically binds to HJ cruciform DNA, conferring on it an open structure. The RuvB hexamer acts as an ATP-dependent pump, pulling dsDNA into and through the RuvAB complex. HJ branch migration allows RuvC to scan DNA until it finds its consensus sequence, where it cleaves and resolves the cruciform DNA. This is Holliday junction branch migration complex subunit RuvA from Myxococcus xanthus (strain DK1622).